The primary structure comprises 935 residues: Protocadherin gamma-A11 (935 aa).

The N-terminal stretch at 1–29 is a signal peptide; the sequence is MANRLQRGDRSRLLLLLCIFLGTLRGFRA. Cadherin domains are found at residues 30-134, 135-243, 244-348, 349-453, 454-563, and 571-677; these read RQIR…APSF, QEDE…IPMF, TQSV…APEI, TITS…PPVF, PHSS…APEI, and DGST…ADLG. The Extracellular segment spans residues 30–693; that stretch reads RQIRYSVPEE…NSETSDLSLY (664 aa). N48 carries an N-linked (GlcNAc...) asparagine glycan. Residues N255, N266, N420, and N546 are each glycosylated (N-linked (GlcNAc...) asparagine). Residues 694–714 form a helical membrane-spanning segment; that stretch reads LVVAVAAVSCIFLVFVIVLLA. Residues 715–935 are Cytoplasmic-facing; the sequence is LRLWRWHKSR…KKKSGKKEKK (221 aa). 2 disordered regions span residues 805–844 and 905–935; these read CDPT…WPNN and ATLT…KEKK. The segment covering 807–844 has biased composition (polar residues); sequence PTSNQQAPPNTDWRFSQAQRPGTSGSQNGDDTGTWPNN. The span at 925 to 935 shows a compositional bias: basic residues; it reads NKKKSGKKEKK.

Its subcellular location is the cell membrane. Its function is as follows. Potential calcium-dependent cell-adhesion protein. May be involved in the establishment and maintenance of specific neuronal connections in the brain. The chain is Protocadherin gamma-A11 (PCDHGA11) from Homo sapiens (Human).